Reading from the N-terminus, the 142-residue chain is Universal stress protein D (142 aa).

This sequence belongs to the universal stress protein A family.

It localises to the cytoplasm. Functionally, required for resistance to DNA-damaging agents. The sequence is that of Universal stress protein D (uspD) from Escherichia coli (strain K12).